A 394-amino-acid chain; its full sequence is Phosphopentomutase (394 aa).

Positions 14, 287, 292, 328, 329, and 340 each coordinate Mn(2+).

Belongs to the phosphopentomutase family. Mn(2+) serves as cofactor.

It localises to the cytoplasm. It catalyses the reaction 2-deoxy-alpha-D-ribose 1-phosphate = 2-deoxy-D-ribose 5-phosphate. It carries out the reaction alpha-D-ribose 1-phosphate = D-ribose 5-phosphate. Its pathway is carbohydrate degradation; 2-deoxy-D-ribose 1-phosphate degradation; D-glyceraldehyde 3-phosphate and acetaldehyde from 2-deoxy-alpha-D-ribose 1-phosphate: step 1/2. In terms of biological role, isomerase that catalyzes the conversion of deoxy-ribose 1-phosphate (dRib-1-P) and ribose 1-phosphate (Rib-1-P) to deoxy-ribose 5-phosphate (dRib-5-P) and ribose 5-phosphate (Rib-5-P), respectively. The sequence is that of Phosphopentomutase from Listeria monocytogenes serotype 4b (strain CLIP80459).